The sequence spans 1196 residues: Sorbin and SH3 domain-containing protein 2 (1196 aa).

2 disordered regions span residues 25–57 (VQSS…ETLN) and 75–95 (PNLQ…GNSG). A phosphoserine mark is found at Ser27, Ser28, and Ser40. Residues 83–92 (PTQSHITING) are compositionally biased toward polar residues. A phosphoserine mark is found at Ser130 and Ser143. Met148 carries the alanine amide modification. A SoHo domain is found at 166–227 (VIKAPHYPGI…YNTPYTYNAG (62 aa)). The span at 235 to 247 (AQSHPAAKTQTYR) shows a compositional bias: polar residues. Disordered stretches follow at residues 235–314 (AQSH…EPGK) and 329–407 (SSID…GDDS). Basic and acidic residues-rich tracts occupy residues 252–262 (SHSDNGTDAFK) and 276–312 (RPRD…EYEP). The residue at position 254 (Ser254) is a Phosphoserine. A compositionally biased stretch (polar residues) spans 329-343 (SSIDRSLERPSSSAS). Residues Ser334, Ser340, Ser343, and Ser354 each carry the phosphoserine modification. Thr372 carries the post-translational modification Phosphothreonine. Position 382 is a phosphoserine (Ser382). Low complexity predominate over residues 382-399 (SSSTFTTSFISSSPSSPS). Residue Thr387 is modified to Phosphothreonine. Phosphoserine occurs at positions 392, 393, 394, 396, 397, 399, 478, 589, 592, 645, 648, 844, and 938. A disordered region spans residues 929 to 958 (QDHESPRSYSSTLTDLGRSVSRERRGTPEK). Basic and acidic residues predominate over residues 948-958 (VSRERRGTPEK). SH3 domains lie at 959 to 1018 (EVKL…KLTP) and 1034 to 1095 (GEIG…VVKR). Phosphoserine is present on residues Ser1113 and Ser1119. The 60-residue stretch at 1137–1196 (GGGEPFQALYNYTPRNEDELELRESDVVDVMEKCDDGWFVGTSRRTKFFGTFPGNYVKRL) folds into the SH3 3 domain.

Interacts with ABL1/c-Abl, ABL2/v-Abl/Arg, ACTN, CBL and PALLD. Interacts with ABL, CBL, DNM1, DNM2, FLOT1, AFDN, PTK2B/PYK2, SAPAP, SPTAN1, SYNJ1, SYNJ2, VCL/vinculin and WASF. Interacts with PTPN12 and WASF1 via its SH3 domains; this interaction may mediate the partial PTPN12 and WASF1 translocation to focal adhesion sites. Ubiquitinated by CBL. Expressed in brain; found in synapses in cerebellum.

The protein localises to the cytoplasm. Its subcellular location is the perinuclear region. The protein resides in the apical cell membrane. It is found in the cell junction. It localises to the focal adhesion. The protein localises to the cell projection. Its subcellular location is the lamellipodium. Its function is as follows. Adapter protein that plays a role in the assembling of signaling complexes, being a link between ABL kinases and actin cytoskeleton. Can form complex with ABL1 and CBL, thus promoting ubiquitination and degradation of ABL1. May play a role in the regulation of pancreatic cell adhesion, possibly by acting on WASF1 phosphorylation, enhancing phosphorylation by ABL1, as well as dephosphorylation by PTPN12. Isoform 2 increases water and sodium absorption in the intestine and gall-bladder. The protein is Sorbin and SH3 domain-containing protein 2 (Sorbs2) of Rattus norvegicus (Rat).